The following is a 662-amino-acid chain: Interferon-induced GTP-binding protein Mx1 (662 aa).

The residue at position 1 (methionine 1) is an N-acetylmethionine. The 274-residue stretch at 67–340 folds into the Dynamin-type G domain; that stretch reads DLALPAIAVI…LITHICKSLP (274 aa). The segment at 77 to 84 is G1 motif; sequence GDQSSGKS. GTP is bound at residue 77 to 84; that stretch reads GDQSSGKS. The segment at 102–104 is G2 motif; it reads VTR. Positions 178-181 are G3 motif; the sequence is DLPG. Residues 178–182 and 247–250 contribute to the GTP site; these read DLPGI and TKPD. Residues 247–250 form a G4 motif region; that stretch reads TKPD. Residues 279–282 form a G5 motif region; sequence KCRG. A bundle signaling element (BSE) region spans residues 341–366; it reads LLENQIRESHQRITEELQKYGVDVPE. Residues 366-533 form a middle domain region; it reads EDENEKMFFL…HFQMEQIVYC (168 aa). The stalk stretch occupies residues 367–632; sequence DENEKMFFLI…KDTYSWLLKE (266 aa). The tract at residues 554–557 is critical for lipid-binding; it reads KKKK. The region spanning 574–662 is the GED domain; it reads MEEIFQHLMA…ARRRLAQFPG (89 aa).

Belongs to the TRAFAC class dynamin-like GTPase superfamily. Dynamin/Fzo/YdjA family. As to quaternary structure, homooligomer. Oligomerizes into multimeric filamentous or ring-like structures by virtue of its stalk domain. Oligomerization is critical for GTPase activity, protein stability, and recognition of viral target structures. Interacts with TRPC1, TRPC3, TRPC4, TRPC5, TRPC6 and TRPC7. Interacts with HSPA5. Interacts with TUBB/TUBB5. Interacts with DDX39A and DDX39B. In terms of processing, ISGylated.

The protein localises to the cytoplasm. It is found in the endoplasmic reticulum membrane. The protein resides in the perinuclear region. Functionally, interferon-induced dynamin-like GTPase with antiviral activity. The chain is Interferon-induced GTP-binding protein Mx1 (MX1) from Pongo abelii (Sumatran orangutan).